The following is a 187-amino-acid chain: Dihydrofolate reductase (187 aa).

The 182-residue stretch at 4 to 185 folds into the DHFR domain; sequence PLNCIVAVSQ…IKYKFEVYEK (182 aa). Residues 8 to 37 form an involved in methotrexate binding region; that stretch reads IVAVSQNMGIGKNGDFPWPMLRNEFKYFQR. NADP(+) contacts are provided by residues alanine 10 and 16-22; that span reads GIGKNGD. 31–36 lines the substrate pocket; it reads EFKYFQ. Position 33 is an N6-acetyllysine; alternate (lysine 33). Lysine 33 is subject to N6-succinyllysine; alternate. 55 to 57 provides a ligand contact to NADP(+); sequence RKT. The segment at 60 to 70 is involved in methotrexate binding; the sequence is SIPEKNRPLKD. Residue arginine 71 coordinates substrate. Residues 77–79 and 117–124 each bind NADP(+); these read SRE and GGSSVYKE. Threonine 137 is a binding site for methotrexate.

Belongs to the dihydrofolate reductase family. Homodimer.

It is found in the mitochondrion. The protein localises to the cytoplasm. It catalyses the reaction (6S)-5,6,7,8-tetrahydrofolate + NADP(+) = 7,8-dihydrofolate + NADPH + H(+). It functions in the pathway cofactor biosynthesis; tetrahydrofolate biosynthesis; 5,6,7,8-tetrahydrofolate from 7,8-dihydrofolate: step 1/1. In terms of biological role, key enzyme in folate metabolism. Contributes to the de novo mitochondrial thymidylate biosynthesis pathway. Catalyzes an essential reaction for de novo glycine and purine synthesis, and for DNA precursor synthesis. Binds its own mRNA. The sequence is that of Dihydrofolate reductase (DHFR) from Mesocricetus auratus (Golden hamster).